The following is a 261-amino-acid chain: tRNA pseudouridine synthase A (261 aa).

The active-site Nucleophile is the D51. Y109 is a substrate binding site.

This sequence belongs to the tRNA pseudouridine synthase TruA family. Homodimer.

The catalysed reaction is uridine(38/39/40) in tRNA = pseudouridine(38/39/40) in tRNA. Its function is as follows. Formation of pseudouridine at positions 38, 39 and 40 in the anticodon stem and loop of transfer RNAs. The sequence is that of tRNA pseudouridine synthase A from Shewanella woodyi (strain ATCC 51908 / MS32).